Here is a 291-residue protein sequence, read N- to C-terminus: Probable 2-(5''-triphosphoribosyl)-3'-dephosphocoenzyme-A synthase (291 aa).

Belongs to the CitG/MdcB family.

The enzyme catalyses 3'-dephospho-CoA + ATP = 2'-(5''-triphospho-alpha-D-ribosyl)-3'-dephospho-CoA + adenine. Involved in the formation of 2-(5''-phosphoribosyl)-3'-dephosphocoenzyme-A, the prosthetic group of the acyl-carrier protein of the malonate decarboxylase. The chain is Probable 2-(5''-triphosphoribosyl)-3'-dephosphocoenzyme-A synthase from Pseudomonas savastanoi pv. phaseolicola (strain 1448A / Race 6) (Pseudomonas syringae pv. phaseolicola (strain 1448A / Race 6)).